The following is a 485-amino-acid chain: Aspartyl/glutamyl-tRNA(Asn/Gln) amidotransferase subunit B (485 aa).

It belongs to the GatB/GatE family. GatB subfamily. In terms of assembly, heterotrimer of A, B and C subunits.

It carries out the reaction L-glutamyl-tRNA(Gln) + L-glutamine + ATP + H2O = L-glutaminyl-tRNA(Gln) + L-glutamate + ADP + phosphate + H(+). It catalyses the reaction L-aspartyl-tRNA(Asn) + L-glutamine + ATP + H2O = L-asparaginyl-tRNA(Asn) + L-glutamate + ADP + phosphate + 2 H(+). Allows the formation of correctly charged Asn-tRNA(Asn) or Gln-tRNA(Gln) through the transamidation of misacylated Asp-tRNA(Asn) or Glu-tRNA(Gln) in organisms which lack either or both of asparaginyl-tRNA or glutaminyl-tRNA synthetases. The reaction takes place in the presence of glutamine and ATP through an activated phospho-Asp-tRNA(Asn) or phospho-Glu-tRNA(Gln). The protein is Aspartyl/glutamyl-tRNA(Asn/Gln) amidotransferase subunit B of Anaplasma marginale (strain Florida).